A 520-amino-acid chain; its full sequence is Cytochrome P450 monooxygenase 98 (520 aa).

Residues 7 to 27 traverse the membrane as a helical segment; it reads MLNNNLLIVIGTFAVCVYIVL. Residue cysteine 445 participates in heme binding.

Belongs to the cytochrome P450 family. The cofactor is heme.

The protein localises to the membrane. It participates in secondary metabolite biosynthesis. Its function is as follows. Cytochrome P450 monooxygenase that is able to use pyrene, phenanthrene, 3,5-dimethoxy-trans-stilbene and 3,5,4'-trimethoxy-trans-stilbene as substrates for oxidation. This is Cytochrome P450 monooxygenase 98 from Postia placenta (strain ATCC 44394 / Madison 698-R) (Brown rot fungus).